A 159-amino-acid polypeptide reads, in one-letter code: Transcription elongation factor GreA (159 aa).

The protein belongs to the GreA/GreB family.

In terms of biological role, necessary for efficient RNA polymerase transcription elongation past template-encoded arresting sites. The arresting sites in DNA have the property of trapping a certain fraction of elongating RNA polymerases that pass through, resulting in locked ternary complexes. Cleavage of the nascent transcript by cleavage factors such as GreA or GreB allows the resumption of elongation from the new 3'terminus. GreA releases sequences of 2 to 3 nucleotides. This is Transcription elongation factor GreA from Buchnera aphidicola subsp. Baizongia pistaciae (strain Bp).